Reading from the N-terminus, the 344-residue chain is Enoyl-[acyl-carrier-protein] reductase, mitochondrial (344 aa).

A mitochondrion-targeting transit peptide spans 1–14; that stretch reads MLKVLSLRSALQRA. The Proton donor role is filled by Tyr69. Residues Asn142, 168–171, 191–193, 255–258, 280–282, and Lys338 contribute to the NADP(+) site; these read NSAV, RSR, YGGM, and FWM.

The protein belongs to the zinc-containing alcohol dehydrogenase family. Quinone oxidoreductase subfamily. Homodimer.

It localises to the mitochondrion. It carries out the reaction a 2,3-saturated acyl-[ACP] + NADP(+) = a (2E)-enoyl-[ACP] + NADPH + H(+). Its function is as follows. Catalyzes the NADPH-dependent reduction of trans-2-enoyl thioesters in mitochondrial fatty acid synthesis (fatty acid synthesis type II). Fatty acid chain elongation in mitochondria uses acyl carrier protein (ACP) as an acyl group carrier, but the enzyme accepts both ACP and CoA thioesters as substrates in vitro. May provide the octanoyl chain used for lipoic acid biosynthesis, regulating protein lipoylation and mitochondrial respiratory activity. Involved in iron homeostasis; affecting Fe-S cluster assembly and ceramide metabolism. Required for proper morphology and bioenergetic functions of mitochondria. Required for maintenance of neurons. In Caenorhabditis elegans, this protein is Enoyl-[acyl-carrier-protein] reductase, mitochondrial.